The primary structure comprises 610 residues: Alpha-fetoprotein (610 aa).

A signal peptide spans 1 to 18 (MKWVVSIFLIVLLNFTES). 3 consecutive Albumin domains span residues 19 to 210 (RTMH…ASIT), 211 to 403 (KELR…EELE), and 404 to 602 (KYIQ…ALIS). Residue His22 coordinates Cu(2+). Disulfide bonds link Cys99-Cys114, Cys113-Cys124, Cys148-Cys193, Cys192-Cys201, Cys224-Cys270, Cys269-Cys277, Cys289-Cys303, and Cys302-Cys314. 3 positions are modified to phosphoserine: Ser111, Ser115, and Ser117. Asn251 is a glycosylation site (N-linked (GlcNAc...) asparagine). Ser345 is modified (phosphoserine). Cystine bridges form between Cys385/Cys394, Cys417/Cys463, Cys462/Cys473, Cys486/Cys502, Cys501/Cys512, Cys539/Cys584, and Cys583/Cys592.

This sequence belongs to the ALB/AFP/VDB family. In terms of assembly, dimeric and trimeric forms have been found in addition to the monomeric form. In terms of tissue distribution, plasma. Synthesized by the fetal liver and yolk sac.

The protein localises to the secreted. Binds copper, nickel, and fatty acids as well as, and bilirubin less well than, serum albumin. The sequence is that of Alpha-fetoprotein (AFP) from Sus scrofa (Pig).